We begin with the raw amino-acid sequence, 116 residues long: UPF0102 protein Sala_0262 (116 aa).

It belongs to the UPF0102 family.

This is UPF0102 protein Sala_0262 from Sphingopyxis alaskensis (strain DSM 13593 / LMG 18877 / RB2256) (Sphingomonas alaskensis).